Consider the following 101-residue polypeptide: Unclassified hydrophobin dewD (101 aa).

Residues 1-21 form the signal peptide; the sequence is MHLSTSAAAILALSLAGPTMA. 4 disulfides stabilise this stretch: cysteine 27–cysteine 81, cysteine 41–cysteine 73, cysteine 42–cysteine 60, and cysteine 82–cysteine 91.

Self-assembles to form functional amyloid fibrils called rodlets. Self-assembly into fibrillar rodlets occurs spontaneously at hydrophobic:hydrophilic interfaces and the rodlets further associate laterally to form amphipathic monolayers.

The protein localises to the secreted. The protein resides in the spore wall. Aerial growth, conidiation, and dispersal of filamentous fungi in the environment rely upon a capability of their secreting small amphipathic proteins called hydrophobins (HPBs) with low sequence identity. Class I can self-assemble into an outermost layer of rodlet bundles on aerial cell surfaces, conferring cellular hydrophobicity that supports fungal growth, development and dispersal; whereas Class II form highly ordered films at water-air interfaces through intermolecular interactions but contribute nothing to the rodlet structure. DewD is an unclassified hydrophobin that contributes to the hydrophobicity of the spore surface. This Emericella nidulans (strain FGSC A4 / ATCC 38163 / CBS 112.46 / NRRL 194 / M139) (Aspergillus nidulans) protein is Unclassified hydrophobin dewD.